A 1342-amino-acid chain; its full sequence is Restriction of telomere capping protein 1 (1342 aa).

Residues 1–39 (MSLSPHVENASIPKGSTPIPKNRNVSSIGKGEFLGSSSS) are disordered. WD repeat units lie at residues 207 to 248 (NKFS…SIDN), 256 to 296 (EHTR…SKSS), 305 to 342 (TASD…YKFA), 367 to 406 (AHTG…NAAE), 439 to 486 (NTDY…IPKH), and 489 to 527 (LSET…TVLE). Disordered regions lie at residues 559 to 593 (PELQ…IGGI), 600 to 619 (TGLT…GPTF), 630 to 651 (ASSF…ENRE), 736 to 766 (KNAT…DDDD), and 788 to 831 (LMNE…DRSR). Positions 630–644 (ASSFNSSSASLTSLT) are enriched in low complexity. Residues 753–766 (DDGDDDDDDDDDDD) are compositionally biased toward acidic residues. The segment covering 815–824 (SSISSISASR) has biased composition (low complexity). Residues 844–884 (KIQTLVDLISIATHNASVYLSIDDLTNFKIWILIRDSLLWD) form a WD 7 repeat. 2 disordered regions span residues 942–963 (AFRA…KLKE) and 1014–1047 (DEHE…PILQ). Composition is skewed to basic and acidic residues over residues 952–963 (DAEKKPVSKLKE) and 1016–1028 (HEHQ…HDSP). A phosphoserine mark is found at Ser1037, Ser1081, Ser1088, Ser1090, Ser1124, and Ser1134. WD repeat units follow at residues 1130 to 1170 (SRPD…KQLY) and 1217 to 1256 (LFGI…LITN). An RING-type; degenerate zinc finger spans residues 1294-1336 (CVLCERPLKKLTMVILPCGHEGHFQCIQEWFLDENEQECPGGC).

It belongs to the WD repeat RTC1 family.

Its subcellular location is the vacuole. May be involved in a process influencing telomere capping. This chain is Restriction of telomere capping protein 1 (RTC1), found in Saccharomyces cerevisiae (strain RM11-1a) (Baker's yeast).